We begin with the raw amino-acid sequence, 392 residues long: Meiotically up-regulated gene 11 protein (392 aa).

It localises to the cytoplasm. The protein localises to the nucleus. Functionally, has a role in meiosis. In Schizosaccharomyces pombe (strain 972 / ATCC 24843) (Fission yeast), this protein is Meiotically up-regulated gene 11 protein (mug11).